Consider the following 24-residue polypeptide: FLPIIASVAAKLIPSIVCRITKKC.

A disulfide bond links Cys-18 and Cys-24.

Expressed by the skin glands.

It localises to the secreted. In terms of biological role, antimicrobial peptide with activity against Gram-negative and Gram-positive bacteria and fungi. Also shows hemolytic activity. The sequence is that of Brevinin-1SPc from Lithobates septentrionalis (Mink frog).